Reading from the N-terminus, the 215-residue chain is Protein GET1 (215 aa).

At 1–4 the chain is on the lumenal side; sequence MPSL. The helical transmembrane segment at 5-24 threads the bilayer; that stretch reads LILIFTIEVAVELINTIGAA. The Cytoplasmic segment spans residues 25–110; it reads TINNLLWRIF…NFDKYITGIR (86 aa). Positions 72-104 form a coiled coil; the sequence is AKWAKLRRQHDKLLEQLEKKKAALDSTKGNFDK. Residues 111 to 131 form a helical membrane-spanning segment; sequence WVGTQGLRYFLPFWYAKVPMF. The Lumenal segment spans residues 132-155; it reads WLPYGWFPYYAEWLVSFPRAPMGS. A helical membrane pass occupies residues 156 to 172; the sequence is VSIASWQLACTGFVVLI. Residues 173-215 lie on the Cytoplasmic side of the membrane; the sequence is KDAITALVVFVMGMRQSNVKQAVPVKAVSGEKASDEKEGKKEL.

This sequence belongs to the WRB/GET1 family. Interacts with GET3.

The protein resides in the endoplasmic reticulum membrane. Functionally, required for the post-translational delivery of tail-anchored (TA) proteins to the endoplasmic reticulum. Acts as a membrane receptor for soluble GET3, which recognizes and selectively binds the transmembrane domain of TA proteins in the cytosol. The polypeptide is Protein GET1 (Pyricularia oryzae (strain 70-15 / ATCC MYA-4617 / FGSC 8958) (Rice blast fungus)).